The sequence spans 284 residues: L-fucose dehydrogenase (284 aa).

Positions 19, 21, 40, 41, 62, 63, 89, 154, 158, 187, 189, and 191 each coordinate NAD(+).

It belongs to the short-chain dehydrogenases/reductases (SDR) family.

The enzyme catalyses L-fucose + NAD(+) = L-fucono-1,5-lactone + NADH + H(+). It catalyses the reaction D-arabinose + NAD(+) = D-arabinono-1,5-lactone + NADH + H(+). It carries out the reaction L-galactose + NAD(+) = L-galactono-1,5-lactone + NADH + H(+). Its pathway is carbohydrate degradation; L-fucose degradation. Its function is as follows. Catalyzes the NAD(+)-dependent oxidation of L-fucose, yielding L-fucono-1,5-lactone, which rapidly converts spontaneously to L-fucone-1,4-lactone. Can also act on D-arabinose and L-galactose, with lower catalytic efficiency. Does not use NADPH. May be the initial enzyme of the putative L-fucose degradation pathway in mammals. The sequence is that of L-fucose dehydrogenase (HSD17B14) from Oryctolagus cuniculus (Rabbit).